A 464-amino-acid chain; its full sequence is uncharacterized protein (464 aa).

Disordered regions lie at residues 290–374 and 445–464; these read YRKQ…ERPK and ETDDEDEENQYSEAEKPLEE. Low complexity predominate over residues 293–302; sequence QQQWQQQQQQ. Residues 303 to 318 are compositionally biased toward basic residues; the sequence is RKVKTPIKKQEAKKKA. Positions 352–367 are enriched in polar residues; sequence DMKQQQQMEKGTTSKQ. Residues 445-454 are compositionally biased toward acidic residues; sequence ETDDEDEENQ.

This is an uncharacterized protein from Macaca fascicularis (Crab-eating macaque).